Reading from the N-terminus, the 169-residue chain is Ribosome maturation factor RimM (169 aa).

Residues 97-169 (EDEVYFKDLI…KIVVDWEYDY (73 aa)) form the PRC barrel domain.

Belongs to the RimM family. In terms of assembly, binds ribosomal protein uS19.

It is found in the cytoplasm. In terms of biological role, an accessory protein needed during the final step in the assembly of 30S ribosomal subunit, possibly for assembly of the head region. Essential for efficient processing of 16S rRNA. May be needed both before and after RbfA during the maturation of 16S rRNA. It has affinity for free ribosomal 30S subunits but not for 70S ribosomes. The chain is Ribosome maturation factor RimM from Francisella tularensis subsp. tularensis (strain WY96-3418).